The sequence spans 334 residues: Spermatogenesis-associated protein 32 (334 aa).

A disordered region spans residues 24 to 98 (SDHHRHHHHH…TESPEQQNYR (75 aa)). Acidic residues predominate over residues 37 to 47 (ENEDEDTEVEA). A compositionally biased stretch (basic and acidic residues) spans 48–60 (ELPRTEPPPKVDP). The segment covering 77-98 (SKTTPETEGDSYTESPEQQNYR) has biased composition (polar residues). A phosphoserine mark is found at serine 135 and serine 138.

In terms of assembly, interacts with syntaxin-1 and ACTB. In terms of tissue distribution, highly expressed in the testis and weakly in the brain and heart.

This chain is Spermatogenesis-associated protein 32 (Spata32), found in Mus musculus (Mouse).